A 209-amino-acid chain; its full sequence is Ion-translocating oxidoreductase complex subunit G (209 aa).

Residues 9–29 traverse the membrane as a helical segment; sequence GLILAVFACVSTGLVALTYAL. Thr175 is subject to FMN phosphoryl threonine.

This sequence belongs to the RnfG family. In terms of assembly, the complex is composed of six subunits: RnfA, RnfB, RnfC, RnfD, RnfE and RnfG. The cofactor is FMN.

The protein resides in the cell inner membrane. Its function is as follows. Part of a membrane-bound complex that couples electron transfer with translocation of ions across the membrane. This is Ion-translocating oxidoreductase complex subunit G from Vibrio cholerae serotype O1 (strain ATCC 39315 / El Tor Inaba N16961).